We begin with the raw amino-acid sequence, 917 residues long: Hexokinase HKDC1 (917 aa).

Residues 1 to 20 form a mitochondrial-binding peptide (MBP) region; the sequence is MFAVHLMAFYFSKLKEDQIK. Hexokinase domains follow at residues 16 to 458 and 464 to 905; these read EDQI…MVTA and QAQR…LITA. ATP is bound by residues Arg-30 and 84 to 89; that span reads DLGGSK. Positions 73–207 are hexokinase small subdomain 1; that stretch reads DGSENGEFLS…DMDVDILALV (135 aa). D-glucose 6-phosphate is bound at residue 84 to 91; it reads DLGGSKFR. Residues Ser-155, 172–173, and 208–209 each bind D-glucose; these read TK and ND. The tract at residues 208 to 447 is hexokinase large subdomain 1; that stretch reads NDTVGTMMTC…CDVRFLLSES (240 aa). D-glucose 6-phosphate is bound by residues Asp-209 and Thr-232. D-glucose-binding positions include Asn-235, Glu-260, and 291–294; that span reads QLFE. 413 to 415 provides a ligand contact to D-glucose 6-phosphate; sequence DGT. 425–426 is an ATP binding site; sequence KR. D-glucose 6-phosphate is bound by residues Ser-449 and 532 to 536; that span reads DLGGT. The segment at 521–654 is hexokinase small subdomain 2; sequence DGTEKGKFLA…EFDLDIVAVV (134 aa). An ATP-binding site is contributed by 532 to 537; it reads DLGGTN. D-glucose is bound by residues 602-603, 619-620, and 655-656; these read SF, TK, and ND. The interval 655–894 is hexokinase large subdomain 2; it reads NDTVGTMMTC…CDVTFMLSED (240 aa). D-glucose 6-phosphate contacts are provided by Asp-656 and Thr-679. Thr-679 serves as a coordination point for ATP. D-glucose-binding positions include 681-682, Glu-707, and Glu-741; that span reads SN. ATP contacts are provided by residues 746–747, 783–787, and 862–866; these read GM, TKFLS, and TLYKL. Residues 860 to 862 and Ser-896 contribute to the D-glucose 6-phosphate site; that span reads DGT.

It belongs to the hexokinase family. Widely expressed. Highly expressed in the brush border, surface epithelium and the myenteric plexus of the small and large intestines; the acinar centrocytes and interlobular ducts of the pancreas; and the alveolar macrophages in the lungs (at protein level). Present at moderate level in the thyroid follicular epithelium (at protein level).

The protein localises to the cytoplasm. The protein resides in the mitochondrion membrane. It localises to the photoreceptor inner segment. The enzyme catalyses a D-hexose + ATP = a D-hexose 6-phosphate + ADP + H(+). The catalysed reaction is D-glucose + ATP = D-glucose 6-phosphate + ADP + H(+). The protein operates within carbohydrate metabolism; hexose metabolism. Its pathway is carbohydrate degradation; glycolysis; D-glyceraldehyde 3-phosphate and glycerone phosphate from D-glucose: step 1/4. In terms of biological role, catalyzes the phosphorylation of hexose to hexose 6-phosphate, although at very low level compared to other hexokinases. Has low glucose phosphorylating activity compared to other hexokinases. Involved in glucose homeostasis and hepatic lipid accumulation. Required to maintain whole-body glucose homeostasis during pregnancy; however additional evidences are required to confirm this role. The polypeptide is Hexokinase HKDC1 (Homo sapiens (Human)).